Here is a 225-residue protein sequence, read N- to C-terminus: DnaA regulatory inactivator Hda (225 aa).

This sequence belongs to the DnaA family. HdA subfamily. As to quaternary structure, the active form seems to be an ADP-bound monomer. Forms the RIDA complex (regulatory inactivation of DnaA) of ATP-DnaA, ADP-Hda and the DNA-loaded beta sliding clamp (dnaN).

Mediates the interaction of DNA replication initiator protein DnaA with DNA polymerase subunit beta sliding clamp (dnaN). Stimulates hydrolysis of ATP-DnaA to ADP-DnaA, rendering DnaA inactive for reinitiation, a process called regulatory inhibition of DnaA or RIDA. The sequence is that of DnaA regulatory inactivator Hda from Klebsiella pneumoniae (strain 342).